The primary structure comprises 185 residues: HTH-type transcriptional regulator PuuR (185 aa).

The interval 1 to 20 (MSDEGLAPGKRLSEIRQQQG) is disordered. Positions 12–66 (LSEIRQQQGLSQRRAAELSGLTHSAISTIEQDKVSPAISTLQKLLKVYGLSLSEF) constitute an HTH cro/C1-type domain. Positions 23 to 42 (QRRAAELSGLTHSAISTIEQ) form a DNA-binding region, H-T-H motif. The Cupin type-2 domain maps to 111–178 (FETYQPGTTT…TSAGICRIIS (68 aa)).

The protein operates within amine and polyamine degradation; putrescine degradation [regulation]. Its function is as follows. Represses puuA, puuD and puuP. This chain is HTH-type transcriptional regulator PuuR (puuR), found in Escherichia coli (strain K12).